The sequence spans 208 residues: Small ribosomal subunit protein uS4 (208 aa).

The S4 RNA-binding domain maps to 97–160; sequence SRLDNIVFRL…KKNDKIAEAL (64 aa).

Belongs to the universal ribosomal protein uS4 family. In terms of assembly, part of the 30S ribosomal subunit. Contacts protein S5. The interaction surface between S4 and S5 is involved in control of translational fidelity.

Functionally, one of the primary rRNA binding proteins, it binds directly to 16S rRNA where it nucleates assembly of the body of the 30S subunit. With S5 and S12 plays an important role in translational accuracy. The chain is Small ribosomal subunit protein uS4 from Mesoplasma florum (strain ATCC 33453 / NBRC 100688 / NCTC 11704 / L1) (Acholeplasma florum).